Consider the following 347-residue polypeptide: 5-deoxyribose 1-phosphate isomerase (347 aa).

Substrate-binding positions include 48–50 (RGA), R91, and Q198. The active-site Proton donor is D239. A substrate-binding site is contributed by 249–250 (NK).

It belongs to the EIF-2B alpha/beta/delta subunits family. DrdI subfamily.

The catalysed reaction is 5-deoxy-alpha-D-ribose 1-phosphate = 5-deoxy-D-ribulose 1-phosphate. Its pathway is carbohydrate degradation. Catalyzes the isomerization of 5-deoxy-alpha-D-ribose 1-phosphate to 5-deoxy-D-ribulose 1-phosphate, as part of a 5-deoxyribose salvage pathway that recycles this toxic radical SAM enzyme by-product to mainstream metabolites. This is 5-deoxyribose 1-phosphate isomerase from Petrotoga mobilis (strain DSM 10674 / SJ95).